The primary structure comprises 429 residues: Phosphoribosylamine--glycine ligase (429 aa).

An ATP-grasp domain is found at 109-316; sequence KDFLARHNIP…LVELCLAACE (208 aa). 135-196 serves as a coordination point for ATP; it reads LREKGAPIVI…EEFLDGEEAS (62 aa). The disordered stretch occupies residues 212 to 237; sequence SQDHKRVGDKDTGPNTGGMGAYSPAP. Residues 213-223 show a composition bias toward basic and acidic residues; sequence QDHKRVGDKDT. The Mg(2+) site is built by Glu286 and Asn288.

Belongs to the GARS family. As to quaternary structure, monomer. Mg(2+) is required as a cofactor. Mn(2+) serves as cofactor.

It carries out the reaction 5-phospho-beta-D-ribosylamine + glycine + ATP = N(1)-(5-phospho-beta-D-ribosyl)glycinamide + ADP + phosphate + H(+). It functions in the pathway purine metabolism; IMP biosynthesis via de novo pathway; N(1)-(5-phospho-D-ribosyl)glycinamide from 5-phospho-alpha-D-ribose 1-diphosphate: step 2/2. This is Phosphoribosylamine--glycine ligase from Escherichia coli O157:H7.